Consider the following 590-residue polypeptide: Potassium-transporting ATPase potassium-binding subunit (590 aa).

4 helical membrane-spanning segments follow: residues 3–23 (AFLLQLAIYLAVLLVLARPLG), 63–83 (HYALAVIAVNVLGALAVYALQ), 134–154 (GLAVQNFLSAATGIAVVIALI), and 177–197 (LYVLLPLSVIVAVFFVSQGAI). A disordered region spans residues 217 to 244 (PKTDAQGNPIKDAQGNPVTEKATTQKQT). Helical transmembrane passes span 284 to 304 (FVQMLSIFLIPAALCFTFGAM), 312 to 332 (WAVLASMTILFVVLAVFEMWA), 359 to 379 (FGVVASSLFVTITTAASCGAV), 388 to 408 (ALGGFVPMFLIQLGEVVFGGV), 411 to 431 (GLYGMLVYAILAVFIAGLMIG), 450 to 470 (SIAILVTPLLVLVGTAVAVLA), 515 to 535 (VALGIVMWLGRFWIIVPVLAM), and 558 to 578 (LFVVLLIGSVLLVGALTYIPA).

Belongs to the KdpA family. As to quaternary structure, the system is composed of three essential subunits: KdpA, KdpB and KdpC.

The protein resides in the cell inner membrane. Part of the high-affinity ATP-driven potassium transport (or Kdp) system, which catalyzes the hydrolysis of ATP coupled with the electrogenic transport of potassium into the cytoplasm. This subunit binds the periplasmic potassium ions and delivers the ions to the membrane domain of KdpB through an intramembrane tunnel. The polypeptide is Potassium-transporting ATPase potassium-binding subunit (Ralstonia nicotianae (strain ATCC BAA-1114 / GMI1000) (Ralstonia solanacearum)).